The chain runs to 275 residues: 4-diphosphocytidyl-2-C-methyl-D-erythritol kinase (275 aa).

Lys9 is a catalytic residue. ATP is bound at residue 90–100 (PVGGGLGGGSS). Asp132 is an active-site residue.

The protein belongs to the GHMP kinase family. IspE subfamily.

The catalysed reaction is 4-CDP-2-C-methyl-D-erythritol + ATP = 4-CDP-2-C-methyl-D-erythritol 2-phosphate + ADP + H(+). The protein operates within isoprenoid biosynthesis; isopentenyl diphosphate biosynthesis via DXP pathway; isopentenyl diphosphate from 1-deoxy-D-xylulose 5-phosphate: step 3/6. Catalyzes the phosphorylation of the position 2 hydroxy group of 4-diphosphocytidyl-2C-methyl-D-erythritol. In Sulfurihydrogenibium sp. (strain YO3AOP1), this protein is 4-diphosphocytidyl-2-C-methyl-D-erythritol kinase.